The primary structure comprises 544 residues: uncharacterized protein (544 aa).

An N-terminal signal peptide occupies residues 1 to 22 (MYFSQNAIILVMLMFVISAVFY).

This is an uncharacterized protein from Methanocaldococcus jannaschii (strain ATCC 43067 / DSM 2661 / JAL-1 / JCM 10045 / NBRC 100440) (Methanococcus jannaschii).